Here is a 434-residue protein sequence, read N- to C-terminus: Glutamine synthetase leaf isozyme, chloroplastic (434 aa).

Disordered stretches follow at residues 1 to 33 (MQVR…ARQP) and 101 to 126 (TISK…GQAP). A chloroplast-targeting transit peptide spans 1–54 (MQVRRDDDGAGGCAGDAVPGGGEGQDGVPARQPAGRVWGVSRAARATSGFKVLA). Gly residues predominate over residues 10 to 25 (AGGCAGDAVPGGGEGQ). Residues 81 to 161 (IIAEYIWVGG…VICDTYTPQG (81 aa)) form the GS beta-grasp domain. The GS catalytic domain maps to 168-434 (KRHMAAQIFS…LAAKKLALKV (267 aa)).

It belongs to the glutamine synthetase family. In terms of assembly, homooctamer.

It is found in the plastid. The protein resides in the chloroplast. It carries out the reaction L-glutamate + NH4(+) + ATP = L-glutamine + ADP + phosphate + H(+). The light-modulated chloroplast enzyme, encoded by a nuclear gene and expressed primarily in leaves, is responsible for the reassimilation of the ammonia generated by photorespiration. In Hordeum vulgare (Barley), this protein is Glutamine synthetase leaf isozyme, chloroplastic.